A 357-amino-acid chain; its full sequence is 3-isopropylmalate dehydrogenase (357 aa).

Position 76 to 89 (76 to 89 (GPKWDNEPSHNRPE)) interacts with NAD(+). The substrate site is built by R96, R106, R135, and D223. Mg(2+)-binding residues include D223, D247, and D251. 281–293 (GSAPDIAGQDKAN) contributes to the NAD(+) binding site.

The protein belongs to the isocitrate and isopropylmalate dehydrogenases family. LeuB type 1 subfamily. In terms of assembly, homodimer. It depends on Mg(2+) as a cofactor. Requires Mn(2+) as cofactor.

It localises to the cytoplasm. It carries out the reaction (2R,3S)-3-isopropylmalate + NAD(+) = 4-methyl-2-oxopentanoate + CO2 + NADH. It functions in the pathway amino-acid biosynthesis; L-leucine biosynthesis; L-leucine from 3-methyl-2-oxobutanoate: step 3/4. Its function is as follows. Catalyzes the oxidation of 3-carboxy-2-hydroxy-4-methylpentanoate (3-isopropylmalate) to 3-carboxy-4-methyl-2-oxopentanoate. The product decarboxylates to 4-methyl-2 oxopentanoate. The chain is 3-isopropylmalate dehydrogenase from Helicobacter hepaticus (strain ATCC 51449 / 3B1).